The sequence spans 369 residues: Coiled-coil domain-containing protein 149 (369 aa).

Residues 1–249 (MKENNNAEIL…AKYKQMAEAV (249 aa)) adopt a coiled-coil conformation.

The protein belongs to the CCDC149 family. As to expression, expressed in amphid and phasmid ciliated neurons, and also pharyngeal, touch receptor and motor neurons.

It is found in the cell projection. The protein resides in the cilium. The sequence is that of Coiled-coil domain-containing protein 149 from Caenorhabditis elegans.